The following is a 2102-amino-acid chain: Probable serine/threonine-protein kinase DDB_G0272282 (2102 aa).

The 118-residue stretch at 1–118 (MKYQLSILGD…NWLVPQNEPA (118 aa)) folds into the PX domain. Positions 124 to 222 (NPDKSGYLIK…WIKAIELSQQ (99 aa)) constitute a PH domain. Over residues 225–240 (QDQEQYRKQEEEERQK) the composition is skewed to basic and acidic residues. 9 disordered regions span residues 225–289 (QDQE…SDGS), 302–390 (GPNN…SDLN), 426–558 (EQPG…SASP), 574–665 (SNLP…PLPN), 685–768 (NNNS…NNSL), 804–842 (KKKE…GTLR), 1029–1051 (QQQQ…SSVN), 1106–1224 (GTPT…PQPQ), and 1476–1514 (SSKV…SSLT). Composition is skewed to low complexity over residues 256–281 (STLT…LPSS) and 304–327 (NNSN…NNHN). Residues 328–348 (HYNHHNNNHNNSHHHHHHHNG) show a composition bias toward basic residues. Composition is skewed to low complexity over residues 353 to 376 (SSQV…STSL) and 426 to 437 (EQPGSYQQPQHQ). The segment covering 438–450 (QGGGGGGGGGGGN) has biased composition (gly residues). The segment covering 466 to 484 (SNLSSRSNSNSSGSSSGSG) has biased composition (low complexity). Residues 485–501 (SSSGSGPIGSGGVGGGL) are compositionally biased toward gly residues. Composition is skewed to low complexity over residues 535-558 (SNSS…SASP) and 587-626 (NANN…NNGN). Positions 627-659 (TASGSSCNTTPNLLPAPTNVSPIQNRARSSPMT) are enriched in polar residues. Positions 804-824 (KKKEKDKEKEKDKEKEKEKEI) are enriched in basic and acidic residues. Residues 827 to 841 (NISTSTTPNKKNGTL) show a composition bias toward polar residues. A compositionally biased stretch (polar residues) spans 1106–1118 (GTPTTTSGDNTPL). 3 stretches are compositionally biased toward low complexity: residues 1119 to 1182 (TNTA…NSSI), 1196 to 1221 (EQQQ…QQQP), and 1476 to 1492 (SSKV…SPIL). Positions 1493 to 1507 (SSPPPPMKQPPPQVI) are enriched in pro residues. Residues 1527-1851 (FEIIKPISRG…AYEVKTHPFF (325 aa)) form the Protein kinase domain. ATP is bound by residues 1533–1541 (ISRGAFGRV) and K1556. D1650 (proton acceptor) is an active-site residue. 3 stretches are compositionally biased toward low complexity: residues 1687 to 1729 (NTNT…SQTN), 1902 to 1999 (SQPQ…NINN), and 2006 to 2052 (NNNS…QINN). 2 disordered regions span residues 1687-1741 (NTNT…KNTL) and 1902-2070 (SQPQ…SKIE). In terms of domain architecture, AGC-kinase C-terminal spans 1852-1911 (ANVNWDTLIDQEMDNIFLPKPENNYDTDYFWDRQSMYDDEAEDDFLTINQSQPQHQSQHQ).

The protein belongs to the protein kinase superfamily. AGC Ser/Thr protein kinase family.

The catalysed reaction is L-seryl-[protein] + ATP = O-phospho-L-seryl-[protein] + ADP + H(+). It carries out the reaction L-threonyl-[protein] + ATP = O-phospho-L-threonyl-[protein] + ADP + H(+). The polypeptide is Probable serine/threonine-protein kinase DDB_G0272282 (Dictyostelium discoideum (Social amoeba)).